The chain runs to 154 residues: PTS system fructose-specific EIIA component (154 aa).

Positions 8-152 constitute a PTS EIIA type-2 domain; the sequence is TITPLELISL…QTVQDVLAEV (145 aa). The Tele-phosphohistidine intermediate role is filled by histidine 70. Residue histidine 70 is modified to Phosphohistidine; by HPr.

The protein localises to the cytoplasm. In terms of biological role, the phosphoenolpyruvate-dependent sugar phosphotransferase system (sugar PTS), a major carbohydrate active transport system, catalyzes the phosphorylation of incoming sugar substrates concomitantly with their translocation across the cell membrane. The enzyme II PtfABC PTS system is involved in fructose transport. The sequence is that of PTS system fructose-specific EIIA component from Haloferax volcanii (strain ATCC 29605 / DSM 3757 / JCM 8879 / NBRC 14742 / NCIMB 2012 / VKM B-1768 / DS2) (Halobacterium volcanii).